Consider the following 208-residue polypeptide: U11/U12 small nuclear ribonucleoprotein 35 kDa protein (208 aa).

In terms of domain architecture, RRM spans 50–128 (LTLFVARLNP…YELLVDVEQE (79 aa)). The tract at residues 133–208 (GWRPRRLGGG…TEDRTHRHTY (76 aa)) is disordered. The segment covering 171–208 (RPAEPRGRETERERDRRDYRDRRHERTHTEDRTHRHTY) has biased composition (basic and acidic residues).

It localises to the nucleus. This Danio rerio (Zebrafish) protein is U11/U12 small nuclear ribonucleoprotein 35 kDa protein (snrnp35).